The sequence spans 378 residues: Ribosomal RNA large subunit methyltransferase G (378 aa).

This sequence belongs to the methyltransferase superfamily. RlmG family.

It localises to the cytoplasm. The enzyme catalyses guanosine(1835) in 23S rRNA + S-adenosyl-L-methionine = N(2)-methylguanosine(1835) in 23S rRNA + S-adenosyl-L-homocysteine + H(+). Its function is as follows. Specifically methylates the guanine in position 1835 (m2G1835) of 23S rRNA. The protein is Ribosomal RNA large subunit methyltransferase G of Shigella flexneri serotype 5b (strain 8401).